The chain runs to 461 residues: Tol-Pal system protein TolB 2 (461 aa).

Residues 1 to 20 (MKIRHLLLLAGLVSAPAIVA) form the signal peptide. The segment at 28-47 (SSSAAQASGDDDGGLTGSVS) is disordered.

This sequence belongs to the TolB family. As to quaternary structure, the Tol-Pal system is composed of five core proteins: the inner membrane proteins TolA, TolQ and TolR, the periplasmic protein TolB and the outer membrane protein Pal. They form a network linking the inner and outer membranes and the peptidoglycan layer.

It is found in the periplasm. Functionally, part of the Tol-Pal system, which plays a role in outer membrane invagination during cell division and is important for maintaining outer membrane integrity. The chain is Tol-Pal system protein TolB 2 from Novosphingobium aromaticivorans (strain ATCC 700278 / DSM 12444 / CCUG 56034 / CIP 105152 / NBRC 16084 / F199).